A 459-amino-acid polypeptide reads, in one-letter code: Bifunctional protein GlmU (459 aa).

The tract at residues 1-230 is pyrophosphorylase; sequence MSNRFAVILA…FDETLGVNDR (230 aa). Residues 9–12, K23, Q73, and 78–79 each bind UDP-N-acetyl-alpha-D-glucosamine; these read LAAG and GT. Residue D103 participates in Mg(2+) binding. Positions 140, 155, 170, and 228 each coordinate UDP-N-acetyl-alpha-D-glucosamine. N228 contacts Mg(2+). The tract at residues 231-251 is linker; it reads VALSQAEIIMKNRINRKNMVN. The segment at 252–459 is N-acetyltransferase; that stretch reads GVTIIDPSNT…VDQLLNKKKS (208 aa). Residues R333 and K351 each coordinate UDP-N-acetyl-alpha-D-glucosamine. H363 acts as the Proton acceptor in catalysis. Y366 and N377 together coordinate UDP-N-acetyl-alpha-D-glucosamine. Acetyl-CoA contacts are provided by residues 386-387, A423, and R440; that span reads NY.

This sequence in the N-terminal section; belongs to the N-acetylglucosamine-1-phosphate uridyltransferase family. It in the C-terminal section; belongs to the transferase hexapeptide repeat family. In terms of assembly, homotrimer. Requires Mg(2+) as cofactor.

Its subcellular location is the cytoplasm. It carries out the reaction alpha-D-glucosamine 1-phosphate + acetyl-CoA = N-acetyl-alpha-D-glucosamine 1-phosphate + CoA + H(+). The enzyme catalyses N-acetyl-alpha-D-glucosamine 1-phosphate + UTP + H(+) = UDP-N-acetyl-alpha-D-glucosamine + diphosphate. It functions in the pathway nucleotide-sugar biosynthesis; UDP-N-acetyl-alpha-D-glucosamine biosynthesis; N-acetyl-alpha-D-glucosamine 1-phosphate from alpha-D-glucosamine 6-phosphate (route II): step 2/2. It participates in nucleotide-sugar biosynthesis; UDP-N-acetyl-alpha-D-glucosamine biosynthesis; UDP-N-acetyl-alpha-D-glucosamine from N-acetyl-alpha-D-glucosamine 1-phosphate: step 1/1. Its pathway is bacterial outer membrane biogenesis; LPS lipid A biosynthesis. Functionally, catalyzes the last two sequential reactions in the de novo biosynthetic pathway for UDP-N-acetylglucosamine (UDP-GlcNAc). The C-terminal domain catalyzes the transfer of acetyl group from acetyl coenzyme A to glucosamine-1-phosphate (GlcN-1-P) to produce N-acetylglucosamine-1-phosphate (GlcNAc-1-P), which is converted into UDP-GlcNAc by the transfer of uridine 5-monophosphate (from uridine 5-triphosphate), a reaction catalyzed by the N-terminal domain. The chain is Bifunctional protein GlmU from Bacillus cereus (strain ZK / E33L).